Reading from the N-terminus, the 300-residue chain is Cation-efflux pump FieF (300 aa).

Transmembrane regions (helical) follow at residues 12–32 (AALA…FAWW), 39–59 (ILAA…NLLV), 82–102 (AALA…LTGI), and 114–134 (PLVG…LVTF). Positions 45 and 49 each coordinate Zn(2+). His153 and Asp157 together coordinate Zn(2+). A run of 2 helical transmembrane segments spans residues 156–176 (SDVM…YGLH) and 182–202 (FALG…YEAI).

The protein belongs to the cation diffusion facilitator (CDF) transporter (TC 2.A.4) family. FieF subfamily. As to quaternary structure, homodimer.

It is found in the cell inner membrane. The catalysed reaction is Zn(2+)(in) + H(+)(out) = Zn(2+)(out) + H(+)(in). The enzyme catalyses Cd(2+)(in) + H(+)(out) = Cd(2+)(out) + H(+)(in). It carries out the reaction Fe(2+)(in) + H(+)(out) = Fe(2+)(out) + H(+)(in). Its function is as follows. Divalent metal cation transporter which exports Zn(2+), Cd(2+) and possibly Fe(2+). May be involved in zinc and iron detoxification by efflux. The polypeptide is Cation-efflux pump FieF (Cronobacter sakazakii (strain ATCC BAA-894) (Enterobacter sakazakii)).